We begin with the raw amino-acid sequence, 483 residues long: Altronate oxidoreductase (483 aa).

An NAD(+)-binding site is contributed by 18–29 (IIQFGEGNFLRA).

The protein belongs to the mannitol dehydrogenase family. UxaB subfamily.

The catalysed reaction is D-altronate + NAD(+) = keto-D-tagaturonate + NADH + H(+). It functions in the pathway carbohydrate metabolism; pentose and glucuronate interconversion. This chain is Altronate oxidoreductase, found in Yersinia enterocolitica serotype O:8 / biotype 1B (strain NCTC 13174 / 8081).